The sequence spans 120 residues: Putative ferric transport system permease-like protein AfuB (120 aa).

Topologically, residues 1–38 (MESLPGQIDKSLDEASLSLRAGSLRTITHILLPLLRPA) are cytoplasmic. The ABC transmembrane type-1 domain maps to 1 to 102 (MESLPGQIDK…VVMLAIIFIF (102 aa)). The chain crosses the membrane as a helical span at residues 39-59 (ILSALIYSFVRAITTVSAIVF). Residues 60–81 (LVTPDTRVATAYILNRVEDGEY) are Periplasmic-facing. A helical transmembrane segment spans residues 82-102 (GVAIAYGSILIVVMLAIIFIF). The Cytoplasmic segment spans residues 103 to 120 (DWLIGESRTSRSKAKNQA).

This sequence belongs to the binding-protein-dependent transport system permease family. FbpB subfamily.

It is found in the cell inner membrane. A severely truncated paralog of the AfuB uptake protein, homologous only to the last 20% of the intact protein in Actinobacillus. The sequence is that of Putative ferric transport system permease-like protein AfuB (afuB) from Escherichia coli (strain K12).